The following is a 341-amino-acid chain: Putative UPF0607 protein ENSP00000381514 (341 aa).

Residues 78–89 show a composition bias toward basic and acidic residues; it reads AEEPKEATEVKD. Disordered stretches follow at residues 78-131 and 216-282; these read AEEP…NPRP and GLLT…KLPC. Residues 108–127 are compositionally biased toward polar residues; the sequence is EAASTSRPLETQGNLTSSWY. Basic residues predominate over residues 243–252; it reads AGHRSRKRKL.

It belongs to the UPF0607 family.

In Homo sapiens (Human), this protein is Putative UPF0607 protein ENSP00000381514.